The chain runs to 86 residues: Large ribosomal subunit protein bL27 (86 aa).

The tract at residues 1–24 (MAHKKGTGSTRNGRDSNSKRLGVK) is disordered.

Belongs to the bacterial ribosomal protein bL27 family.

The polypeptide is Large ribosomal subunit protein bL27 (Prochlorococcus marinus (strain AS9601)).